Consider the following 160-residue polypeptide: Transcription elongation factor GreA (160 aa).

A coiled-coil region spans residues 10 to 37 (TLEGKAKLENELQELKTVKRKEVVERIK).

This sequence belongs to the GreA/GreB family.

Its function is as follows. Necessary for efficient RNA polymerase transcription elongation past template-encoded arresting sites. The arresting sites in DNA have the property of trapping a certain fraction of elongating RNA polymerases that pass through, resulting in locked ternary complexes. Cleavage of the nascent transcript by cleavage factors such as GreA or GreB allows the resumption of elongation from the new 3'terminus. GreA releases sequences of 2 to 3 nucleotides. The chain is Transcription elongation factor GreA from Listeria welshimeri serovar 6b (strain ATCC 35897 / DSM 20650 / CCUG 15529 / CIP 8149 / NCTC 11857 / SLCC 5334 / V8).